The primary structure comprises 245 residues: tRNA (guanine-N(7)-)-methyltransferase (245 aa).

S-adenosyl-L-methionine-binding residues include Glu-69, Glu-94, Asp-121, and Asp-144. The active site involves Asp-144. Substrate contacts are provided by residues Lys-148, Asp-180, and 217–220; that span reads TKFE. Residues 200 to 225 are disordered; it reads NLSSSGDYVPRPENRPKTKFERRGEG. Basic and acidic residues predominate over residues 209 to 225; that stretch reads PRPENRPKTKFERRGEG.

It belongs to the class I-like SAM-binding methyltransferase superfamily. TrmB family.

The catalysed reaction is guanosine(46) in tRNA + S-adenosyl-L-methionine = N(7)-methylguanosine(46) in tRNA + S-adenosyl-L-homocysteine. The protein operates within tRNA modification; N(7)-methylguanine-tRNA biosynthesis. Functionally, catalyzes the formation of N(7)-methylguanine at position 46 (m7G46) in tRNA. This is tRNA (guanine-N(7)-)-methyltransferase from Idiomarina loihiensis (strain ATCC BAA-735 / DSM 15497 / L2-TR).